The primary structure comprises 415 residues: Vascular endothelial growth factor C (415 aa).

Positions 1–31 are cleaved as a signal peptide; the sequence is MHLLCFLSLACSLLAAALIPGPREAPATVAA. Positions 32–107 are excised as a propeptide; sequence FESGLGFSEA…RTGDTVKLAA (76 aa). 3 disulfide bridges follow: Cys127–Cys169, Cys158–Cys205, and Cys162–Cys207. 3 N-linked (GlcNAc...) asparagine glycosylation sites follow: Asn171, Asn201, and Asn236. A propeptide spanning residues 224 to 415 is cleaved from the precursor; sequence SLPATLPQCQ…PSYWKRPHLN (192 aa). 4 consecutive repeat copies span residues 276 to 291, 300 to 315, 324 to 339, and 343 to 358. Residues 276–358 are 4 X 16 AA repeats of C-X(10)-C-X-C-X(1,3)-C; the sequence is CGPNKELDED…LNPGKCACEC (83 aa).

Belongs to the PDGF/VEGF growth factor family. In terms of assembly, homodimer; non-covalent and antiparallel. Interacts with FLT4/VEGFR3; the interaction is required for FLT4/VEGFR3 homodimarization and activation. Post-translationally, undergoes a complex proteolytic maturation which generates a variety of processed secreted forms with increased activity toward VEGFR-3, but only the fully processed form could activate VEGFR-2. VEGF-C first form an antiparallel homodimer linked by disulfide bonds. Before secretion, a cleavage occurs between Arg-223 and Ser-224 producing a heterotetramer. The next extracellular step of the processing removes the N-terminal propeptide. Finally the mature VEGF-C is composed mostly of two VEGF homology domains (VHDs) bound by non-covalent interactions. As to expression, highly expressed in the lung, ovary, preputial gland and the adrenal gland. Expressed in the post-pubertal mammary glands.

The protein resides in the secreted. Functionally, growth factor active in angiogenesis, and endothelial cell growth, stimulating their proliferation and migration and also has effects on the permeability of blood vessels. May function in angiogenesis of the venous and lymphatic vascular systems during embryogenesis, and also in the maintenance of differentiated lymphatic endothelium in adults. Binds and activates KDR/VEGFR2 and FLT4/VEGFR3 receptors. In Rattus norvegicus (Rat), this protein is Vascular endothelial growth factor C (Vegfc).